The chain runs to 322 residues: GDSL esterase/lipase At5g03600 (322 aa).

Ser21 acts as the Nucleophile in catalysis. Active-site residues include Asp295 and His298.

It belongs to the 'GDSL' lipolytic enzyme family.

The sequence is that of GDSL esterase/lipase At5g03600 from Arabidopsis thaliana (Mouse-ear cress).